A 135-amino-acid chain; its full sequence is Flagellar assembly factor FliW 1 (135 aa).

The protein belongs to the FliW family. As to quaternary structure, interacts with translational regulator CsrA and flagellin(s).

The protein resides in the cytoplasm. Functionally, acts as an anti-CsrA protein, binds CsrA and prevents it from repressing translation of its target genes, one of which is flagellin. Binds to flagellin and participates in the assembly of the flagellum. The protein is Flagellar assembly factor FliW 1 of Helicobacter pylori (strain ATCC 700392 / 26695) (Campylobacter pylori).